Here is a 231-residue protein sequence, read N- to C-terminus: Large ribosomal subunit protein uL1 (231 aa).

Belongs to the universal ribosomal protein uL1 family. As to quaternary structure, part of the 50S ribosomal subunit.

In terms of biological role, binds directly to 23S rRNA. The L1 stalk is quite mobile in the ribosome, and is involved in E site tRNA release. Its function is as follows. Protein L1 is also a translational repressor protein, it controls the translation of the L11 operon by binding to its mRNA. This chain is Large ribosomal subunit protein uL1, found in Methylococcus capsulatus (strain ATCC 33009 / NCIMB 11132 / Bath).